A 219-amino-acid chain; its full sequence is Vesicle-associated membrane protein 712 (219 aa).

Over 1-189 (MSILYALVAR…NNTVWWRNCK (189 aa)) the chain is Cytoplasmic. One can recognise a Longin domain in the interval 7–111 (LVARGTVVLA…AMNDEFSRVL (105 aa)). In terms of domain architecture, v-SNARE coiled-coil homology spans 126–186 (TISRIKGEMN…RRFNNTVWWR (61 aa)). The helical; Anchor for type IV membrane protein transmembrane segment at 190–210 (LTLLLILVLLVIIYIGVAFAC) threads the bilayer. Residues 211–219 (HGPTLPSCV) are Vesicular-facing.

Belongs to the synaptobrevin family. In terms of tissue distribution, expressed in flowers, leaves, stems and roots.

The protein localises to the vacuole membrane. Its subcellular location is the prevacuolar compartment membrane. Involved in the targeting and/or fusion of transport vesicles to their target membrane. This is Vesicle-associated membrane protein 712 from Arabidopsis thaliana (Mouse-ear cress).